Here is a 112-residue protein sequence, read N- to C-terminus: MKSLLFTLAVFMLLAQLVSGNWYVKKCLNDVGICKKKCKPEELHVKNGRAMCGKQRDCCVPADKRANYPAFCVQTKTTRTSTVTATAATTTTLVMTTASMSSMAPTPVSPTS.

The N-terminal stretch at methionine 1 to glycine 20 is a signal peptide. The interval asparagine 21–aspartate 63 is in vitro binds to LPS, mediates antimicrobial activity and inhibits LPS-mediated inflammation. 3 cysteine pairs are disulfide-bonded: cysteine 27-cysteine 58, cysteine 34-cysteine 52, and cysteine 38-cysteine 59.

This sequence belongs to the beta-defensin family. In terms of assembly, homodimer or homooligomer; disulfide-linked. In terms of processing, O-glycosylated; glycans contain alpha(2,3)-linked sialic acids.

It is found in the secreted. Functionally, highly glycosylated atypical beta-defensin involved in several aspects of sperm function. Facilitates sperm transport in the female reproductive tract and contributes to sperm protection against immunodetection; both functions are probably implicating the negative surface charge provided by its O-linked oligosaccharides in the sperm glycocalyx. Involved in binding of sperm to oviductal epithelial cells to form a sperm reservoir until ovulation. Release from the sperm surface during capacitation and ovaluation by an elevation of oviductal fluid pH is unmasking other surface components and allows sperm to penetrate the cumulus matrix and bind to the zona pellucida of the oocyte. In vitro has antimicrobial activity and may inhibit LPS-mediated inflammation. The chain is Beta-defensin 126 (DEFB126) from Hylobates lar (Lar gibbon).